The following is a 509-amino-acid chain: Dol-P-Glc:Glc(2)Man(9)GlcNAc(2)-PP-Dol alpha-1,2-glucosyltransferase (509 aa).

Residues 1–4 (MGKL) lie on the Cytoplasmic side of the membrane. The chain crosses the membrane as a helical span at residues 5 to 25 (AVAAITSLWVIPMSIIVNHIV). The Lumenal segment spans residues 26–57 (PEPYMDEIFHVPQAQQYCNGNFRSWDPMITTP). Residues 58–78 (PGLYYLSLAHVASLFPGMLLM) traverse the membrane as a helical segment. The Cytoplasmic portion of the chain corresponds to 79–99 (ENTSQSFSEACSTSVLRSTNA). Residues 100–120 (VSAVLCGVLVYEIIRFLGPNL) form a helical membrane-spanning segment. The Lumenal segment spans residues 121-124 (SDRK). A helical transmembrane segment spans residues 125–145 (ATFMALVMSLYPLHWFFTFLY). Residues 146–170 (YTDVASLTAVLAMYLTCLKRRYVLS) lie on the Cytoplasmic side of the membrane. The helical transmembrane segment at 171–191 (ALFGTLAVFIRQTNVVWMLFV) threads the bilayer. Residues 192 to 285 (ACSGILDFTL…KWRILIKFSP (94 aa)) are Lumenal-facing. Residues 210 to 254 (QEVNQELHQSSNKKGATLRSNLRKRKSDISSDTSDPFNHGQTVPS) form a disordered region. 2 stretches are compositionally biased toward polar residues: residues 215–229 (ELHQ…TLRS) and 239–254 (SSDT…TVPS). A helical transmembrane segment spans residues 286–306 (FIFVVVAFGIFILWNGGIVLG). At 307–311 (AKEAH) the chain is on the cytoplasmic side. Residues 312–332 (VVSLHFAQIMYFSLVSALFTA) form a helical membrane-spanning segment. Residues 333-355 (PLHFSVNQLRHQFHQLHRNWSLS) lie on the Lumenal side of the membrane. An N-linked (GlcNAc...) asparagine glycan is attached at N351. Residues 356-376 (LILTLVALVAGFVSVHFFSLA) form a helical membrane-spanning segment. Over 377–400 (HPYLLADNRHYPFYLWRKIINAHW) the chain is Cytoplasmic. A helical membrane pass occupies residues 401–421 (LMKYILVPVYVYSWFSILTLL). At 422–428 (AKTRRQT) the chain is on the lumenal side. The helical transmembrane segment at 429–449 (WILVYFLATCGVLVPTPLIEF) threads the bilayer. The Cytoplasmic portion of the chain corresponds to 450–472 (RYYTIPFYLFMLHSCVRSSSFAT). The helical transmembrane segment at 473-493 (WLLIGTIFVSINVFTMAMFLF) threads the bilayer. Residues 494–509 (RPFKWSHEDGVQRFIW) lie on the Lumenal side of the membrane.

This sequence belongs to the ALG10 glucosyltransferase family.

Its subcellular location is the endoplasmic reticulum membrane. It catalyses the reaction an alpha-D-Glc-(1-&gt;3)-alpha-D-Glc-(1-&gt;3)-alpha-D-Man-(1-&gt;2)-alpha-D-Man-(1-&gt;2)-alpha-D-Man-(1-&gt;3)-[alpha-D-Man-(1-&gt;2)-alpha-D-Man-(1-&gt;3)-[alpha-D-Man-(1-&gt;2)-alpha-D-Man-(1-&gt;6)]-alpha-D-Man-(1-&gt;6)]-beta-D-Man-(1-&gt;4)-beta-D-GlcNAc-(1-&gt;4)-alpha-D-GlcNAc-diphospho-di-trans,poly-cis-dolichol + a di-trans,poly-cis-dolichyl beta-D-glucosyl phosphate = a alpha-D-Glc-(1-&gt;2)-alpha-D-Glc-(1-&gt;3)-alpha-D-Glc-(1-&gt;3)-alpha-D-Man-(1-&gt;2)-alpha-D-Man-(1-&gt;2)-alpha-D-Man-(1-&gt;3)-[alpha-D-Man-(1-&gt;2)-alpha-D-Man-(1-&gt;3)-[alpha-D-Man-(1-&gt;2)-alpha-D-Man-(1-&gt;6)]-alpha-D-Man-(1-&gt;6)]-beta-D-Man-(1-&gt;4)-beta-D-GlcNAc-(1-&gt;4)-alpha-D-GlcNAc-diphospho-di-trans,poly-cis-dolichol + a di-trans,poly-cis-dolichyl phosphate + H(+). It functions in the pathway protein modification; protein glycosylation. Dol-P-Glc:Glc(2)Man(9)GlcNAc(2)-PP-Dol alpha-1,2-glucosyltransferase that operates in the biosynthetic pathway of dolichol-linked oligosaccharides, the glycan precursors employed in protein asparagine (N)-glycosylation. The assembly of dolichol-linked oligosaccharides begins on the cytosolic side of the endoplasmic reticulum membrane and finishes in its lumen. The sequential addition of sugars to dolichol pyrophosphate produces dolichol-linked oligosaccharides containing fourteen sugars, including two GlcNAcs, nine mannoses and three glucoses. Once assembled, the oligosaccharide is transferred from the lipid to nascent proteins by oligosaccharyltransferases. In the lumen of the endoplasmic reticulum, adds the third and last glucose residue from dolichyl phosphate glucose (Dol-P-Glc) onto the lipid-linked oligosaccharide intermediate Glc(2)Man(9)GlcNAc(2)-PP-Dol to produce Glc(3)Man(9)GlcNAc(2)-PP-Dol. In Arabidopsis thaliana (Mouse-ear cress), this protein is Dol-P-Glc:Glc(2)Man(9)GlcNAc(2)-PP-Dol alpha-1,2-glucosyltransferase.